A 152-amino-acid chain; its full sequence is Protein CHLOROPLAST VESICULATION (152 aa).

The transit peptide at 1–22 (MAGRISCCLNLPPLDSNSAQSL) directs the protein to the chloroplast. Residues 48-65 (CSFVLGVAATVVIGGIQI) traverse the membrane as a helical segment. The interval 92 to 152 (RWSDKRTCPP…RVNRGGCFSV (61 aa)) is important for chloroplast destabilization and the formation of CV-containing vesicles.

As to quaternary structure, interacts with the photosystem II subunit PsbO1 via its C-terminal region in the chloroplast thylakoid membrane and in CV-containing vesicles (CCVs). Mostly expressed in senescent and mature leaves but not in young leaves.

It localises to the plastid. It is found in the chloroplast membrane. The protein localises to the chloroplast thylakoid membrane. Its subcellular location is the chloroplast envelope. The protein resides in the vacuole. It localises to the vesicle. Functionally, triggers stress-induced chloroplast degradation, independently of autophagy and senescence-associated vacuoles. After targeting to the chloroplast, triggers its destabilization and subsequent disassembly, inducing the formation of CV-containing vesicles (CCVs) carrying stromal proteins, envelope membrane proteins, and thylakoid membrane proteins which are released from the chloroplasts and mobilized to the vacuole for proteolysis. This chain is Protein CHLOROPLAST VESICULATION, found in Arabidopsis thaliana (Mouse-ear cress).